The primary structure comprises 305 residues: Protoheme IX farnesyltransferase (305 aa).

The next 9 membrane-spanning stretches (helical) occupy residues 38–58, 60–80, 110–130, 131–151, 161–181, 185–205, 227–247, 249–269, and 285–305; these read FITT…SFLG, LDIV…SCAI, AYAF…MTTV, TSAV…TMWS, IGSV…TGTI, AWVL…SLAI, VTKR…FFLG, LGWP…VIGL, and FVYS…ITLF.

The protein belongs to the UbiA prenyltransferase family. Protoheme IX farnesyltransferase subfamily. As to quaternary structure, interacts with CtaA.

It localises to the cell membrane. It catalyses the reaction heme b + (2E,6E)-farnesyl diphosphate + H2O = Fe(II)-heme o + diphosphate. The protein operates within porphyrin-containing compound metabolism; heme O biosynthesis; heme O from protoheme: step 1/1. Its function is as follows. Converts heme B (protoheme IX) to heme O by substitution of the vinyl group on carbon 2 of heme B porphyrin ring with a hydroxyethyl farnesyl side group. This is Protoheme IX farnesyltransferase from Bacillus pumilus (strain SAFR-032).